A 58-amino-acid polypeptide reads, in one-letter code: Small ribosomal subunit protein bS21 (58 aa).

Belongs to the bacterial ribosomal protein bS21 family.

This Prochlorococcus marinus (strain MIT 9515) protein is Small ribosomal subunit protein bS21.